The following is a 169-amino-acid chain: Large ribosomal subunit protein uL10 (169 aa).

Belongs to the universal ribosomal protein uL10 family. In terms of assembly, part of the ribosomal stalk of the 50S ribosomal subunit. The N-terminus interacts with L11 and the large rRNA to form the base of the stalk. The C-terminus forms an elongated spine to which L12 dimers bind in a sequential fashion forming a multimeric L10(L12)X complex.

Its function is as follows. Forms part of the ribosomal stalk, playing a central role in the interaction of the ribosome with GTP-bound translation factors. The chain is Large ribosomal subunit protein uL10 from Rickettsia rickettsii (strain Iowa).